Reading from the N-terminus, the 163-residue chain is 3-hydroxyacyl-[acyl-carrier-protein] dehydratase FabZ (163 aa).

H58 is an active-site residue.

It belongs to the thioester dehydratase family. FabZ subfamily.

Its subcellular location is the cytoplasm. The enzyme catalyses a (3R)-hydroxyacyl-[ACP] = a (2E)-enoyl-[ACP] + H2O. Its function is as follows. Involved in unsaturated fatty acids biosynthesis. Catalyzes the dehydration of short chain beta-hydroxyacyl-ACPs and long chain saturated and unsaturated beta-hydroxyacyl-ACPs. The sequence is that of 3-hydroxyacyl-[acyl-carrier-protein] dehydratase FabZ from Francisella philomiragia subsp. philomiragia (strain ATCC 25017 / CCUG 19701 / FSC 153 / O#319-036).